The following is a 123-amino-acid chain: Small ribosomal subunit protein uS12 (123 aa).

The disordered stretch occupies residues 1–21 (MPTIEQLVRKGRQAKPKKSKT). Residues 9-20 (RKGRQAKPKKSK) are compositionally biased toward basic residues. A 3-methylthioaspartic acid modification is found at D89.

The protein belongs to the universal ribosomal protein uS12 family. In terms of assembly, part of the 30S ribosomal subunit. Contacts proteins S8 and S17. May interact with IF1 in the 30S initiation complex.

Functionally, with S4 and S5 plays an important role in translational accuracy. Its function is as follows. Interacts with and stabilizes bases of the 16S rRNA that are involved in tRNA selection in the A site and with the mRNA backbone. Located at the interface of the 30S and 50S subunits, it traverses the body of the 30S subunit contacting proteins on the other side and probably holding the rRNA structure together. The combined cluster of proteins S8, S12 and S17 appears to hold together the shoulder and platform of the 30S subunit. In Bifidobacterium adolescentis (strain ATCC 15703 / DSM 20083 / NCTC 11814 / E194a), this protein is Small ribosomal subunit protein uS12.